Consider the following 151-residue polypeptide: UPF0756 membrane protein Aflv_0503 (151 aa).

Transmembrane regions (helical) follow at residues 4-24, 52-72, 85-105, and 115-135; these read FIFLFILLVIGMMAKNQSLII, LGVTIITIAVLVPIATGKIGF, WIAMLSGIAVALLAKGGVALL, and LVLGTILAVSLFKGVAVGPLI.

The protein belongs to the UPF0756 family.

It is found in the cell membrane. This is UPF0756 membrane protein Aflv_0503 from Anoxybacillus flavithermus (strain DSM 21510 / WK1).